We begin with the raw amino-acid sequence, 378 residues long: Acid phosphatase-like protein XcAP-2 (378 aa).

Positions 1–19 are cleaved as a signal peptide; the sequence is MKTTILLLVVLTIVQLSKA. Disulfide bonds link cysteine 147-cysteine 374, cysteine 168-cysteine 220, and cysteine 347-cysteine 351.

The protein belongs to the histidine acid phosphatase family.

Its subcellular location is the secreted. Probably modulates blood feeding of fleas on vertebrate species by binding and sequestering different mediators involved in the host response. Binds histamine. Binds leukotriene B4, leukotriene C4, leukotriene D4 and leukotriene E4. Does not bind serotonin, adrenaline, noradrenaline, ADP, and stable analogs of thromboxane A2: U-46619 and cTXA2. This Xenopsylla cheopis (Oriental rat flea) protein is Acid phosphatase-like protein XcAP-2.